A 201-amino-acid chain; its full sequence is Holliday junction resolvase RecU (201 aa).

Residues Thr87, Asp89, Glu102, and Gln121 each coordinate Mg(2+).

The protein belongs to the RecU family. It depends on Mg(2+) as a cofactor.

The protein localises to the cytoplasm. It catalyses the reaction Endonucleolytic cleavage at a junction such as a reciprocal single-stranded crossover between two homologous DNA duplexes (Holliday junction).. Endonuclease that resolves Holliday junction intermediates in genetic recombination. Cleaves mobile four-strand junctions by introducing symmetrical nicks in paired strands. Promotes annealing of linear ssDNA with homologous dsDNA. Required for DNA repair, homologous recombination and chromosome segregation. In Listeria welshimeri serovar 6b (strain ATCC 35897 / DSM 20650 / CCUG 15529 / CIP 8149 / NCTC 11857 / SLCC 5334 / V8), this protein is Holliday junction resolvase RecU.